The chain runs to 205 residues: Recombination protein RecR (205 aa).

A C4-type zinc finger spans residues 59 to 74 (CAMCNTFCEGGLCDIC). One can recognise a Toprim domain in the interval 82 to 177 (RRLMVVHMPA…KVSRLSQGIP (96 aa)).

It belongs to the RecR family.

In terms of biological role, may play a role in DNA repair. It seems to be involved in an RecBC-independent recombinational process of DNA repair. It may act with RecF and RecO. The sequence is that of Recombination protein RecR from Neisseria meningitidis serogroup C (strain 053442).